Reading from the N-terminus, the 1040-residue chain is Desmoglein-4 (1040 aa).

Residues 1 to 23 form the signal peptide; that stretch reads MDWLLFRNICLLILFMVVLGVNS. Positions 24–49 are excised as a propeptide; sequence EFIVEVKELDIENGTTTWQTVRRQKR. Cadherin domains are found at residues 50 to 157, 158 to 269, 270 to 385, and 389 to 497; these read EWIK…PPVF, TQNV…FPIL, EKTS…GPTF, and SMTF…CPVI. The Extracellular segment spans residues 50–633; sequence EWIKFAAACR…RQSNVGLGPA (584 aa). Residue Asn110 is glycosylated (N-linked (GlcNAc...) asparagine). Asn545 is a glycosylation site (N-linked (GlcNAc...) asparagine). A helical membrane pass occupies residues 634–654; that stretch reads GIGMIILGLLLLFLSPLLLLM. Residues 655-1040 are Cytoplasmic-facing; that stretch reads CCCKRRQPEG…RYSNIHYSRQ (386 aa). 2 Desmoglein repeat repeats span residues 883–909 and 910–940; these read TLSE…IVTE and TYTA…ETVM. The segment at 1015–1040 is disordered; it reads QTTRSTSPMTSQHRVTRYSNIHYSRQ.

In terms of assembly, interacts with JUP.

Its subcellular location is the cell membrane. It localises to the cell junction. The protein resides in the desmosome. In terms of biological role, a component of desmosome cell-cell junctions which are required for positive regulation of cellular adhesion. Coordinates the transition from proliferation to differentiation in hair follicle keratinocytes. Plays a role in moderating lymphocyte migration to inflamed skin and maintaining homeostasis of the epidermal inflammatory response. In Rattus norvegicus (Rat), this protein is Desmoglein-4 (Dsg4).